Consider the following 380-residue polypeptide: Palmitoyltransferase ZDHHC20 (380 aa).

Over 1–14 (MAPWTLWRCCQRVV) the chain is Cytoplasmic. A helical membrane pass occupies residues 15 to 35 (GWVPVLFITFVVVWSYYAYVV). Residues 36–53 (ELCVSTISRTGEKGKTVV) are Lumenal-facing. A helical transmembrane segment spans residues 54-74 (YLVAFHLFFVMFVWSYWMTIF). Residues 75–169 (TSPASPSKEF…NNCVGFTNYK (95 aa)) are Cytoplasmic-facing. One can recognise a DHHC domain in the interval 126–176 (RYCEKCQLIKPDRAHHCSACDRCVLKMDHHCPWVNNCVGFTNYKFFMLFLL). The Zn(2+) site is built by C128 and C131. Substrate is bound by residues K135 and 140-143 (HHCS). Residues H141, C142, C145, C148, and H155 each coordinate Zn(2+). The S-palmitoyl cysteine intermediate role is filled by C156. C162 contributes to the Zn(2+) binding site. A helical membrane pass occupies residues 170-190 (FFMLFLLYSLLYCLFVAATVL). At 191 to 222 (EYFIKFWTLCRRKSTENCPKNEPTVLNFPSAK) the chain is on the lumenal side. A helical transmembrane segment spans residues 223–246 (FHVLFLFFVSAMFFVSVLSLFSYH). At 247 to 380 (CWLVGKNRTT…NNHVTVEIEN (134 aa)) the chain is on the cytoplasmic side. A phosphoserine mark is found at S320, S345, and S354.

It belongs to the DHHC palmitoyltransferase family. Post-translationally, autopalmitoylated (in vitro). Highest levels in lung.

It localises to the golgi apparatus membrane. It is found in the cell membrane. The protein localises to the cytoplasm. The protein resides in the perinuclear region. Its subcellular location is the endoplasmic reticulum membrane. It localises to the endoplasmic reticulum-Golgi intermediate compartment membrane. It catalyses the reaction L-cysteinyl-[protein] + hexadecanoyl-CoA = S-hexadecanoyl-L-cysteinyl-[protein] + CoA. The enzyme catalyses L-cysteinyl-[protein] + tetradecanoyl-CoA = S-tetradecanoyl-L-cysteinyl-[protein] + CoA. The catalysed reaction is L-cysteinyl-[protein] + octadecanoyl-CoA = S-octadecanoyl-L-cysteinyl-[protein] + CoA. In terms of biological role, palmitoyltransferase that could catalyze the addition of palmitate onto various protein substrates. Catalyzes palmitoylation of Cys residues in the cytoplasmic C-terminus of EGFR, and modulates the duration of EGFR signaling by modulating palmitoylation-dependent EGFR internalization and degradation. Has a preference for acyl-CoA with C16 fatty acid chains. Can also utilize acyl-CoA with C14 and C18 fatty acid chains. May palmitoylate CALHM1 subunit of gustatory voltage-gated ion channels and modulate channel gating and kinetics. This is Palmitoyltransferase ZDHHC20 from Mus musculus (Mouse).